The sequence spans 235 residues: Putative HAD-hydrolase YfnB (235 aa).

Aspartate 10 functions as the Nucleophile in the catalytic mechanism.

Belongs to the HAD-like hydrolase superfamily. YjjG family.

The sequence is that of Putative HAD-hydrolase YfnB (yfnB) from Bacillus subtilis (strain 168).